The chain runs to 206 residues: Protein-methionine-sulfoxide reductase heme-binding subunit MsrQ (206 aa).

6 consecutive transmembrane segments (helical) span residues 7–27, 43–63, 77–97, 112–132, 142–162, and 172–192; these read IIIHVCCLGPVAWLAWVLLSG, FLGFSALTILLIMFILGKVFY, LGLWAWFYVVLHVYAYLALEL, GYLIIGAIAFLILTLMALSSW, WWFYLHQLGYYALLLGAIHYV, and SMLYLILSIMILCDALYGLFI.

This sequence belongs to the MsrQ family. Heterodimer of a catalytic subunit (MsrP) and a heme-binding subunit (MsrQ). FMN serves as cofactor. The cofactor is heme b.

It is found in the cell inner membrane. Its function is as follows. Part of the MsrPQ system that repairs oxidized periplasmic proteins containing methionine sulfoxide residues (Met-O), using respiratory chain electrons. Thus protects these proteins from oxidative-stress damage caused by reactive species of oxygen and chlorine generated by the host defense mechanisms. MsrPQ is essential for the maintenance of envelope integrity under bleach stress, rescuing a wide series of structurally unrelated periplasmic proteins from methionine oxidation. MsrQ provides electrons for reduction to the reductase catalytic subunit MsrP, using the quinone pool of the respiratory chain. This is Protein-methionine-sulfoxide reductase heme-binding subunit MsrQ from Pasteurella multocida (strain Pm70).